Reading from the N-terminus, the 239-residue chain is Ribosomal RNA large subunit methyltransferase E (239 aa).

Positions 88, 90, 111, 127, and 151 each coordinate S-adenosyl-L-methionine. Catalysis depends on Lys191, which acts as the Proton acceptor.

This sequence belongs to the class I-like SAM-binding methyltransferase superfamily. RNA methyltransferase RlmE family.

The protein resides in the cytoplasm. The enzyme catalyses uridine(2552) in 23S rRNA + S-adenosyl-L-methionine = 2'-O-methyluridine(2552) in 23S rRNA + S-adenosyl-L-homocysteine + H(+). Specifically methylates the uridine in position 2552 of 23S rRNA at the 2'-O position of the ribose in the fully assembled 50S ribosomal subunit. The chain is Ribosomal RNA large subunit methyltransferase E from Bartonella bacilliformis (strain ATCC 35685 / KC583 / Herrer 020/F12,63).